The sequence spans 203 residues: Orotate phosphoribosyltransferase (203 aa).

Residues arginine 94, lysine 98, histidine 100, and 120 to 128 (EDLISTGGS) each bind 5-phospho-alpha-D-ribose 1-diphosphate. Serine 124 provides a ligand contact to orotate.

It belongs to the purine/pyrimidine phosphoribosyltransferase family. PyrE subfamily. Homodimer. The cofactor is Mg(2+).

It carries out the reaction orotidine 5'-phosphate + diphosphate = orotate + 5-phospho-alpha-D-ribose 1-diphosphate. The protein operates within pyrimidine metabolism; UMP biosynthesis via de novo pathway; UMP from orotate: step 1/2. Catalyzes the transfer of a ribosyl phosphate group from 5-phosphoribose 1-diphosphate to orotate, leading to the formation of orotidine monophosphate (OMP). The sequence is that of Orotate phosphoribosyltransferase from Staphylococcus saprophyticus subsp. saprophyticus (strain ATCC 15305 / DSM 20229 / NCIMB 8711 / NCTC 7292 / S-41).